The following is a 63-amino-acid chain: Large ribosomal subunit protein bL35 (63 aa).

It belongs to the bacterial ribosomal protein bL35 family.

The chain is Large ribosomal subunit protein bL35 from Campylobacter jejuni subsp. jejuni serotype O:2 (strain ATCC 700819 / NCTC 11168).